Consider the following 594-residue polypeptide: A-type ATP synthase subunit A (594 aa).

236-243 (GPFGSGKT) is an ATP binding site.

This sequence belongs to the ATPase alpha/beta chains family. In terms of assembly, has multiple subunits with at least A(3), B(3), C, D, E, F, H, I and proteolipid K(x).

It localises to the cell membrane. The enzyme catalyses ATP + H2O + 4 H(+)(in) = ADP + phosphate + 5 H(+)(out). Component of the A-type ATP synthase that produces ATP from ADP in the presence of a proton gradient across the membrane. The A chain is the catalytic subunit. This Pyrobaculum neutrophilum (strain DSM 2338 / JCM 9278 / NBRC 100436 / V24Sta) (Thermoproteus neutrophilus) protein is A-type ATP synthase subunit A.